The following is a 117-amino-acid chain: MALTTERVKLFFEWFLFFGAIFIAITILYILLVLLFEVPRYIKELVRCLVEYLTRRRVWMQRTQLTEATGDVEIGRGIVEDRRDQEPAVIPHVSQVIPSQPNRRDDQGRRGNAGPMF.

A helical transmembrane segment spans residues 15–35 (FLFFGAIFIAITILYILLVLL). Residues 83 to 117 (RDQEPAVIPHVSQVIPSQPNRRDDQGRRGNAGPMF) form a disordered region.

It localises to the host cell membrane. Transports viral genome to neighboring plant cells directly through plasmosdesmata, without any budding. The movement protein allows efficient cell to cell propagation, by bypassing the host cell wall barrier. Begomovirus genome is shuttled out of nucleus by Nuclear shuttle protein (NSP) and the movement protein transports the DNA-NSP complex to cell plasmodesmata and facilitates further movement across the cell wall. Acts as a suppressor of RNA-mediated gene silencing, also known as post-transcriptional gene silencing (PTGS), a mechanism of plant viral defense that limits the accumulation of viral RNAs. This Banana bunchy top virus (isolate Autralia) (BBTV) protein is Movement and RNA silencing protein (DNA-M).